The primary structure comprises 412 residues: Imidazolonepropionase (412 aa).

2 residues coordinate Fe(3+): H71 and H73. Positions 71 and 73 each coordinate Zn(2+). 3 residues coordinate 4-imidazolone-5-propanoate: R80, Y143, and H176. Position 143 (Y143) interacts with N-formimidoyl-L-glutamate. A Fe(3+)-binding site is contributed by H241. H241 serves as a coordination point for Zn(2+). Residue Q244 participates in 4-imidazolone-5-propanoate binding. Fe(3+) is bound at residue D316. D316 contributes to the Zn(2+) binding site. N-formimidoyl-L-glutamate is bound by residues N318 and G320. A 4-imidazolone-5-propanoate-binding site is contributed by T321.

This sequence belongs to the metallo-dependent hydrolases superfamily. HutI family. Requires Zn(2+) as cofactor. Fe(3+) is required as a cofactor.

The protein localises to the cytoplasm. It catalyses the reaction 4-imidazolone-5-propanoate + H2O = N-formimidoyl-L-glutamate. It participates in amino-acid degradation; L-histidine degradation into L-glutamate; N-formimidoyl-L-glutamate from L-histidine: step 3/3. Functionally, catalyzes the hydrolytic cleavage of the carbon-nitrogen bond in imidazolone-5-propanoate to yield N-formimidoyl-L-glutamate. It is the third step in the universal histidine degradation pathway. The sequence is that of Imidazolonepropionase from Aromatoleum aromaticum (strain DSM 19018 / LMG 30748 / EbN1) (Azoarcus sp. (strain EbN1)).